The sequence spans 114 residues: UPF0342 protein SH1117 (114 aa).

It belongs to the UPF0342 family.

This chain is UPF0342 protein SH1117, found in Staphylococcus haemolyticus (strain JCSC1435).